The sequence spans 109 residues: Elongin-C (109 aa).

Belongs to the SKP1 family.

The protein localises to the nucleus. Functionally, SIII, also known as elongin, is a general transcription elongation factor that increases the RNA polymerase II transcription elongation past template-encoded arresting sites. Subunit A is transcriptionally active and its transcription activity is strongly enhanced by binding to the dimeric complex of the SIII regulatory subunits B and C (elongin BC complex). In terms of biological role, the elongin BC complex seems to be involved as an adapter protein in the proteasomal degradation of target proteins via different E3 ubiquitin ligase complexes. This chain is Elongin-C (tceb1), found in Dictyostelium discoideum (Social amoeba).